The sequence spans 402 residues: Metacaspase-1 (402 aa).

Residues Met-1–Pro-79 form a disordered region. Residues Pro-23–Tyr-45 show a composition bias toward low complexity. Catalysis depends on residues His-193 and Cys-249.

It belongs to the peptidase C14B family.

Involved in cell death (apoptosis). The chain is Metacaspase-1 (MCA1) from Mycosarcoma maydis (Corn smut fungus).